The chain runs to 449 residues: Protein tweety homolog 1 (449 aa).

Residues 1–43 lie on the Extracellular side of the membrane; it reads MSSSHGYRASWWTYILHQVPHTNFQFEVVDNQFAPQEWPYQQA. A helical membrane pass occupies residues 44–64; it reads LLFLASIAGLCLAISLILICV. At 65–86 the chain is on the cytoplasmic side; it reads YLIRFCCCSSQEDDDSKSHRVC. A helical membrane pass occupies residues 87 to 107; it reads CVTWSCVAAVIICCAGIGIGF. Residues 108 to 212 lie on the Extracellular side of the membrane; the sequence is YGNSETNDGV…QVNFIEDYRW (105 aa). Asparagine 128 carries an N-linked (GlcNAc...) asparagine glycan. A helical membrane pass occupies residues 213–233; that stretch reads LAYILLLLLDLIICLFTLLGL. Over 234–238 the chain is Cytoplasmic; it reads AKQIK. The chain crosses the membrane as a helical span at residues 239–259; that stretch reads WLVIVMTVVSFFVLLLSWGSM. Topologically, residues 260–388 are extracellular; that stretch reads GLEMATAVGL…LKGLCYDGME (129 aa). Disulfide bonds link cysteine 273–cysteine 383 and cysteine 301–cysteine 368. Asparagine 282 and asparagine 353 each carry an N-linked (GlcNAc...) asparagine glycan. A helical membrane pass occupies residues 389-409; sequence GILFLLLFSFLSALSFTAAIC. The Cytoplasmic portion of the chain corresponds to 410–449; sequence SLPRAWKRFQNRDLDYDDMDEDDPFNPQESKRFVQWQSSI.

Belongs to the tweety family. Homotetramer; disulfide-linked. Homodimer.

It is found in the cell membrane. The catalysed reaction is chloride(in) = chloride(out). It carries out the reaction L-glutamate(out) = L-glutamate(in). Functionally, may act as a calcium-independent, swelling-dependent volume-regulated anion channel (VRAC-swell) which plays a pivotal role in the process of regulatory volume decrease (RVD) in the brain through the efflux of anions like chloride and organic osmolytes like glutamate. This is Protein tweety homolog 1 (ttyh1) from Xenopus tropicalis (Western clawed frog).